We begin with the raw amino-acid sequence, 339 residues long: Beta-ketoacyl-[acyl-carrier-protein] synthase III (339 aa).

Active-site residues include cysteine 119 and histidine 262. The ACP-binding stretch occupies residues 263 to 267; sequence QANQR. The active site involves asparagine 292.

Belongs to the thiolase-like superfamily. FabH family. In terms of assembly, homodimer.

Its subcellular location is the cytoplasm. The catalysed reaction is malonyl-[ACP] + acetyl-CoA + H(+) = 3-oxobutanoyl-[ACP] + CO2 + CoA. It participates in lipid metabolism; fatty acid biosynthesis. Its function is as follows. Catalyzes the condensation reaction of fatty acid synthesis by the addition to an acyl acceptor of two carbons from malonyl-ACP. Catalyzes the first condensation reaction which initiates fatty acid synthesis and may therefore play a role in governing the total rate of fatty acid production. Possesses both acetoacetyl-ACP synthase and acetyl transacylase activities. Its substrate specificity determines the biosynthesis of branched-chain and/or straight-chain of fatty acids. In Prochlorococcus marinus (strain MIT 9313), this protein is Beta-ketoacyl-[acyl-carrier-protein] synthase III.